Here is a 151-residue protein sequence, read N- to C-terminus: Small ribosomal subunit protein uS19 (151 aa).

Residues 1–23 (MVVNKQGSVKSIKRKARKSRKVT) are disordered. Basic residues predominate over residues 11–23 (SIKRKARKSRKVT).

It belongs to the universal ribosomal protein uS19 family.

Its function is as follows. Protein S19 forms a complex with S13 that binds strongly to the 16S ribosomal RNA. This chain is Small ribosomal subunit protein uS19 (rps19), found in Thermoplasma volcanium (strain ATCC 51530 / DSM 4299 / JCM 9571 / NBRC 15438 / GSS1).